The primary structure comprises 78 residues: Small integral membrane protein 10-like protein 2A (78 aa).

This Homo sapiens (Human) protein is Small integral membrane protein 10-like protein 2A.